We begin with the raw amino-acid sequence, 305 residues long: HPr kinase/phosphorylase (305 aa).

Residues H138 and K159 contribute to the active site. ATP is bound at residue G153–S160. S160 contacts Mg(2+). D177 functions as the Proton acceptor; for phosphorylation activity. Proton donor; for dephosphorylation activity in the catalytic mechanism. Positions I201–D210 are important for the catalytic mechanism of both phosphorylation and dephosphorylation. E202 is a Mg(2+) binding site. R243 is a catalytic residue. The tract at residues P264–R269 is important for the catalytic mechanism of dephosphorylation.

The protein belongs to the HPrK/P family. In terms of assembly, homohexamer. Requires Mg(2+) as cofactor.

It catalyses the reaction [HPr protein]-L-serine + ATP = [HPr protein]-O-phospho-L-serine + ADP + H(+). The catalysed reaction is [HPr protein]-O-phospho-L-serine + phosphate + H(+) = [HPr protein]-L-serine + diphosphate. Its function is as follows. Catalyzes the ATP- as well as the pyrophosphate-dependent phosphorylation of a specific serine residue in HPr, a phosphocarrier protein of the phosphoenolpyruvate-dependent sugar phosphotransferase system (PTS). HprK/P also catalyzes the pyrophosphate-producing, inorganic phosphate-dependent dephosphorylation (phosphorolysis) of seryl-phosphorylated HPr (P-Ser-HPr). The two antagonistic activities of HprK/P are regulated by several intracellular metabolites, which change their concentration in response to the absence or presence of rapidly metabolisable carbon sources (glucose, fructose, etc.) in the growth medium. Therefore, by controlling the phosphorylation state of HPr, HPrK/P is a sensor enzyme that plays a major role in the regulation of carbon metabolism and sugar transport: it mediates carbon catabolite repression (CCR), and regulates PTS-catalyzed carbohydrate uptake and inducer exclusion. The protein is HPr kinase/phosphorylase of Thermoanaerobacter pseudethanolicus (strain ATCC 33223 / 39E) (Clostridium thermohydrosulfuricum).